A 46-amino-acid polypeptide reads, in one-letter code: Large ribosomal subunit protein bL36 (46 aa).

It belongs to the bacterial ribosomal protein bL36 family.

The chain is Large ribosomal subunit protein bL36 from Escherichia coli O7:K1 (strain IAI39 / ExPEC).